We begin with the raw amino-acid sequence, 171 residues long: Large ribosomal subunit protein bL9 (171 aa).

It belongs to the bacterial ribosomal protein bL9 family.

Binds to the 23S rRNA. The chain is Large ribosomal subunit protein bL9 from Rickettsia conorii (strain ATCC VR-613 / Malish 7).